The primary structure comprises 102 residues: Small ribosomal subunit protein uS10 (102 aa).

This sequence belongs to the universal ribosomal protein uS10 family. In terms of assembly, part of the 30S ribosomal subunit.

Its function is as follows. Involved in the binding of tRNA to the ribosomes. This is Small ribosomal subunit protein uS10 from Acidiphilium cryptum (strain JF-5).